A 231-amino-acid polypeptide reads, in one-letter code: Platelet-activating factor acetylhydrolase IB subunit alpha1 (231 aa).

Position 2 is an N-acetylserine (S2). S2 carries the phosphoserine modification. Residues S47, D192, and H195 contribute to the active site.

The protein belongs to the 'GDSL' lipolytic enzyme family. Platelet-activating factor acetylhydrolase IB beta/gamma subunits subfamily. As to quaternary structure, forms a catalytic dimer which is either homodimer (alpha1/alpha1 homodimer) or heterodimer with PAFAH1B2 (alpha1/alpha2 heterodimer). Component of the cytosolic (PAF-AH (I)) heterotetrameric enzyme, which is composed of PAFAH1B1 (beta), PAFAH1B2 (alpha2) and PAFAH1B3 (alpha1) subunits. The catalytic activity of the enzyme resides in the alpha1 (PAFAH1B3) and alpha2 (PAFAH1B2) subunits, whereas the beta subunit (PAFAH1B1) has regulatory activity. Trimer formation is not essential for the catalytic activity. Interacts with VLDLR; this interaction may modulate the Reelin pathway. In terms of tissue distribution, in the adult, expressed in brain, skeletal muscle, kidney, thymus, spleen, colon, testis, ovary and peripheral blood leukocytes. In the fetus, highest expression occurs in brain.

It is found in the cytoplasm. The enzyme catalyses a 1-O-alkyl-2-acetyl-sn-glycero-3-phosphocholine + H2O = a 1-O-alkyl-sn-glycero-3-phosphocholine + acetate + H(+). The catalysed reaction is 1-O-hexadecyl-2-acetyl-sn-glycero-3-phosphocholine + H2O = 1-O-hexadecyl-sn-glycero-3-phosphocholine + acetate + H(+). It catalyses the reaction 1-O-hexadecyl-2-acetyl-sn-glycero-3-phosphate + H2O = 1-O-hexadecyl-sn-glycero-3-phosphate + acetate + H(+). With respect to regulation, beta subunit (PAFAH1B1) inhibits the acetylhydrolase activity of the alpha1/alpha1 catalytic homodimer. Alpha1 catalytic subunit of the cytosolic type I platelet-activating factor (PAF) acetylhydrolase (PAF-AH (I)) heterotetrameric enzyme that catalyzes the hydrolyze of the acetyl group at the sn-2 position of PAF and its analogs and modulates the action of PAF. The activity and substrate specificity of PAF-AH (I) are affected by its subunit composition. Both alpha1/alpha1 homodimer (PAFAH1B3/PAFAH1B3 homodimer) and alpha1/alpha2 heterodimer(PAFAH1B3/PAFAH1B2 heterodimer) hydrolyze 1-O-alkyl-2-acetyl-sn-glycero-3-phosphoric acid (AAGPA) more efficiently than PAF, but they have little hydrolytic activity towards 1-O-alkyl-2-acetyl-sn-glycero-3-phosphorylethanolamine (AAGPE). Plays an important role during the development of brain. This chain is Platelet-activating factor acetylhydrolase IB subunit alpha1, found in Homo sapiens (Human).